A 391-amino-acid chain; its full sequence is Matrix metalloproteinase-23 (391 aa).

At 1-19 the chain is on the cytoplasmic side; the sequence is MGWRACLRPEASGAVQGRW. Residues 1–79 constitute a propeptide that is removed on maturation; that stretch reads MGWRACLRPE…LSMLVTRRRR (79 aa). A helical; Signal-anchor for type II membrane protein transmembrane segment spans residues 20-38; that stretch reads LGAVLSGLCLLSALAFLEW. The Lumenal portion of the chain corresponds to 39–391; that stretch reads LGSPTETAWN…TYSWRVRVRS (353 aa). Asparagine 93 and asparagine 149 each carry an N-linked (GlcNAc...) asparagine glycan. Residue histidine 212 coordinates Zn(2+). Glutamate 213 is a catalytic residue. Residues histidine 216 and histidine 222 each coordinate Zn(2+). A glycan (N-linked (GlcNAc...) asparagine) is linked at asparagine 233. The ShKT domain occupies 256 to 290; the sequence is CLDRIFVCTSWARKGFCDVRQRLMKRLCPRSCDFC. 3 cysteine pairs are disulfide-bonded: cysteine 256/cysteine 290, cysteine 263/cysteine 283, and cysteine 272/cysteine 287. The region spanning 296–381 is the Ig-like C2-type domain; that stretch reads PTVATTTSPT…VVRHRQRVLT (86 aa). N-linked (GlcNAc...) asparagine glycosylation is present at asparagine 317. Cysteine 322 and cysteine 371 form a disulfide bridge.

This sequence belongs to the peptidase M10A family. It depends on Zn(2+) as a cofactor. In terms of processing, N-glycosylated. Proteolytic cleavage might yield an active form. In terms of tissue distribution, expressed at the highest levels in ovary and uterus. In ovary expression is strictly confined to granulosa cells of preantral and small antral follicles. Detected also in testis and prostate.

It is found in the membrane. It localises to the endoplasmic reticulum membrane. Inhibited by TIMP2. Functionally, protease. May regulate the surface expression of some potassium channels by retaining them in the endoplasmic reticulum. In Rattus norvegicus (Rat), this protein is Matrix metalloproteinase-23 (Mmp23).